A 338-amino-acid chain; its full sequence is LINE-1 retrotransposable element ORF1 protein (338 aa).

A disordered region spans residues 1 to 40 (MGKKQNRKTGNSKTQSASPPPKERSSSPATEQSWMENDFD). Polar residues-rich tracts occupy residues 8 to 17 (KTGNSKTQSA) and 26 to 35 (SSPATEQSWM). The stretch at 49–153 (RSNYSELRED…QSLQEIWDYV (105 aa)) forms a coiled coil. The interval 157–252 (NLRLIGVPES…KGKPIRLTAD (96 aa)) is RNA recognition motif (RRM) domain. The segment at 253 to 317 (LSAETLQARR…TTRPALKELL (65 aa)) is C-terminal domain (CTD).

The protein belongs to the transposase 22 family. Homotrimer (via coiled coil domain). May also form larger homooligomers. May interact with DDX39A, HNRNPA1, SERBP1 and YBX1. Interacts with TEX19 and UBR2. Interacts with MOV10. Interacts with APOBEC3D; this interaction inhibits LINE-1 retrotransposition. Post-translationally, polyubiquitinated, probably by UBR2, which induces its degradation.

It localises to the nucleus. Its subcellular location is the nucleolus. The protein localises to the cytoplasm. It is found in the cytoplasmic ribonucleoprotein granule. The protein resides in the stress granule. Its function is as follows. Nucleic acid-binding protein which is essential for retrotransposition of LINE-1 elements in the genome. Functions as a nucleic acid chaperone binding its own transcript and therefore preferentially mobilizing the transcript from which they are encoded. This chain is LINE-1 retrotransposable element ORF1 protein (L1RE1), found in Homo sapiens (Human).